Reading from the N-terminus, the 86-residue chain is Large ribosomal subunit protein bL27 (86 aa).

Residues 1–22 (MATKKAGGSSRNGRDSAGRRLG) are disordered.

The protein belongs to the bacterial ribosomal protein bL27 family.

In Rickettsia bellii (strain RML369-C), this protein is Large ribosomal subunit protein bL27.